The primary structure comprises 278 residues: UPF0276 protein Ssed_2857 (278 aa).

This sequence belongs to the UPF0276 family.

The polypeptide is UPF0276 protein Ssed_2857 (Shewanella sediminis (strain HAW-EB3)).